The chain runs to 165 residues: Small ribosomal subunit protein uS5 (165 aa).

In terms of domain architecture, S5 DRBM spans 10–73 (LKEKVVFINR…EDAKKHLVEV (64 aa)).

It belongs to the universal ribosomal protein uS5 family. As to quaternary structure, part of the 30S ribosomal subunit. Contacts proteins S4 and S8.

Functionally, with S4 and S12 plays an important role in translational accuracy. Its function is as follows. Located at the back of the 30S subunit body where it stabilizes the conformation of the head with respect to the body. The chain is Small ribosomal subunit protein uS5 from Clostridium novyi (strain NT).